Consider the following 166-residue polypeptide: V-type proton ATPase subunit c4 (166 aa).

Topologically, residues 1 to 13 (MASSGFSGDETAP) are lumenal. A helical membrane pass occupies residues 14 to 34 (FFGFLGAAAALVFSCMGAAYG). Over 35 to 56 (TAKSGVGVASMGVMRPELVMKS) the chain is Cytoplasmic. The chain crosses the membrane as a helical span at residues 57-77 (IVPVVMAGVLGIYGLIIAVII). Residues 78–96 (STGINPKAKSYYLFDGYAH) are Lumenal-facing. Residues 97 to 118 (LSSGLACGLAGLSAGMAIGIVG) form a helical membrane-spanning segment. Residues 119–130 (DAGVRANAQQPK) lie on the Cytoplasmic side of the membrane. The helical transmembrane segment at 131-156 (LFVGMILILIFAEALALYGLIVGIIL) threads the bilayer. The Lumenal segment spans residues 157–166 (SSRAGQSRAE).

The protein belongs to the V-ATPase proteolipid subunit family. V-ATPase is a heteromultimeric enzyme composed of a peripheral catalytic V1 complex (components A to H) attached to an integral membrane V0 proton pore complex (components: a, c, c'', d and e). The proteolipid components c and c'' are present as a hexameric ring that forms the proton-conducting pore. Interacts with APD2.

The protein localises to the vacuole membrane. In terms of biological role, proton-conducting pore forming subunit of the membrane integral V0 complex of vacuolar ATPase. V-ATPase is responsible for acidifying a variety of intracellular compartments in eukaryotic cells. This is V-type proton ATPase subunit c4 (VHA-c4) from Arabidopsis thaliana (Mouse-ear cress).